We begin with the raw amino-acid sequence, 414 residues long: S-adenosylmethionine synthase (414 aa).

Histidine 11 contributes to the ATP binding site. Residue aspartate 13 participates in Mg(2+) binding. Glutamate 39 is a K(+) binding site. Glutamate 52 and glutamine 95 together coordinate L-methionine. Residues 95-105 (QSPDIAQGVNM) are flexible loop. ATP is bound by residues 169 to 171 (DGK), 245 to 246 (KF), aspartate 254, 260 to 261 (RK), alanine 277, and lysine 281. Aspartate 254 is an L-methionine binding site. Lysine 285 lines the L-methionine pocket.

Belongs to the AdoMet synthase family. As to quaternary structure, homotetramer; dimer of dimers. The cofactor is Mg(2+). Requires K(+) as cofactor.

The protein resides in the cytoplasm. The enzyme catalyses L-methionine + ATP + H2O = S-adenosyl-L-methionine + phosphate + diphosphate. Its pathway is amino-acid biosynthesis; S-adenosyl-L-methionine biosynthesis; S-adenosyl-L-methionine from L-methionine: step 1/1. Catalyzes the formation of S-adenosylmethionine (AdoMet) from methionine and ATP. The overall synthetic reaction is composed of two sequential steps, AdoMet formation and the subsequent tripolyphosphate hydrolysis which occurs prior to release of AdoMet from the enzyme. This chain is S-adenosylmethionine synthase, found in Synechococcus sp. (strain JA-2-3B'a(2-13)) (Cyanobacteria bacterium Yellowstone B-Prime).